The sequence spans 297 residues: Cyclin-dependent kinase 1 (297 aa).

The Protein kinase domain maps to 4 to 287 (FEKIEKIGEG…AKDILEHPYF (284 aa)). Residues 10–18 (IGEGTYGVV) and Lys-33 each bind ATP. Residue Thr-14 is modified to Phosphothreonine. Residue Tyr-15 is modified to Phosphotyrosine. Asp-128 serves as the catalytic Proton acceptor. Tyr-160 is modified (phosphotyrosine). Thr-161 carries the phosphothreonine; by CAK modification.

This sequence belongs to the protein kinase superfamily. CMGC Ser/Thr protein kinase family. CDC2/CDKX subfamily. Forms a stable but non-covalent complex with a regulatory subunit and with a cyclin. Component of the Frs-CycA-Cdk1 complex composed of Cdk1, CycA and Z600.

Its subcellular location is the nucleus. The enzyme catalyses L-seryl-[protein] + ATP = O-phospho-L-seryl-[protein] + ADP + H(+). It carries out the reaction L-threonyl-[protein] + ATP = O-phospho-L-threonyl-[protein] + ADP + H(+). The catalysed reaction is [DNA-directed RNA polymerase] + ATP = phospho-[DNA-directed RNA polymerase] + ADP + H(+). Its activity is regulated as follows. Phosphorylation at Thr-14 or Tyr-15 inactivates the enzyme, while phosphorylation at Thr-161 activates it. Its function is as follows. Plays a key role in the control of the eukaryotic cell cycle. Required for entry into S-phase and mitosis. In embryos, promotes the release of Rif1 from chromatin during mid-blastula transition. p34 is a component of the kinase complex that phosphorylates the repetitive C-terminus of RNA polymerase II. In Drosophila melanogaster (Fruit fly), this protein is Cyclin-dependent kinase 1.